We begin with the raw amino-acid sequence, 53 residues long: UPF0391 membrane protein BPSS2216 (53 aa).

A run of 2 helical transmembrane segments spans residues 5 to 25 and 30 to 50; these read ALVF…GIAA and IAKI…VLGV.

Belongs to the UPF0391 family.

It localises to the cell membrane. This is UPF0391 membrane protein BPSS2216 from Burkholderia pseudomallei (strain K96243).